A 325-amino-acid chain; its full sequence is Phosphate import ATP-binding protein PstB (325 aa).

The region spanning Ile79–Ile320 is the ABC transporter domain. Gly111–Ser118 contacts ATP.

Belongs to the ABC transporter superfamily. Phosphate importer (TC 3.A.1.7) family. In terms of assembly, the complex is composed of two ATP-binding proteins (PstB), two transmembrane proteins (PstC and PstA) and a solute-binding protein (PstS).

The protein resides in the cell membrane. The catalysed reaction is phosphate(out) + ATP + H2O = ADP + 2 phosphate(in) + H(+). Part of the ABC transporter complex PstSACB involved in phosphate import. Responsible for energy coupling to the transport system. This is Phosphate import ATP-binding protein PstB from Mycoplasmoides gallisepticum (strain R(low / passage 15 / clone 2)) (Mycoplasma gallisepticum).